We begin with the raw amino-acid sequence, 205 residues long: Small ribosomal subunit protein uS4 (205 aa).

Positions 26 to 47 (PVNKREYGPGQHGQRRKQKPSD) are disordered. The S4 RNA-binding domain occupies 94–154 (RRLDAVVYRL…EKSKHLAIVL (61 aa)).

It belongs to the universal ribosomal protein uS4 family. In terms of assembly, part of the 30S ribosomal subunit. Contacts protein S5. The interaction surface between S4 and S5 is involved in control of translational fidelity.

One of the primary rRNA binding proteins, it binds directly to 16S rRNA where it nucleates assembly of the body of the 30S subunit. Functionally, with S5 and S12 plays an important role in translational accuracy. The sequence is that of Small ribosomal subunit protein uS4 from Gluconacetobacter diazotrophicus (strain ATCC 49037 / DSM 5601 / CCUG 37298 / CIP 103539 / LMG 7603 / PAl5).